The following is a 49-amino-acid chain: Large ribosomal subunit protein bL33B (49 aa).

Belongs to the bacterial ribosomal protein bL33 family.

In Staphylococcus epidermidis (strain ATCC 12228 / FDA PCI 1200), this protein is Large ribosomal subunit protein bL33B (rpmG2).